Here is a 440-residue protein sequence, read N- to C-terminus: Xaa-Pro dipeptidase (440 aa).

5 residues coordinate Mn(2+): Asp244, Asp255, His335, Glu380, and Glu419.

The protein belongs to the peptidase M24B family. Bacterial-type prolidase subfamily. Requires Mn(2+) as cofactor.

The catalysed reaction is Xaa-L-Pro dipeptide + H2O = an L-alpha-amino acid + L-proline. Functionally, splits dipeptides with a prolyl residue in the C-terminal position. The chain is Xaa-Pro dipeptidase from Shewanella halifaxensis (strain HAW-EB4).